Here is a 282-residue protein sequence, read N- to C-terminus: Mitochondrial outer membrane protein porin (282 aa).

Belongs to the eukaryotic mitochondrial porin family.

It is found in the mitochondrion outer membrane. Its function is as follows. Forms a channel through the cell membrane that allows diffusion of small hydrophilic molecules. The channel adopts an open conformation at low or zero membrane potential and a closed conformation at potentials above 30-40 mV. The open state has a weak anion selectivity whereas the closed state is cation-selective. This chain is Mitochondrial outer membrane protein porin (POR1), found in Candida albicans (strain SC5314 / ATCC MYA-2876) (Yeast).